The sequence spans 222 residues: Gamma-glutamylcyclotransferase and putative RNase MJ0434 (222 aa).

Arg-75 is an active-site residue. The short motif at Arg-75–Tyr-82 is the RX(4)HXY motif element. Tyr-82 is subject to O-di-AMP-tyrosine.

The protein in the N-terminal section; belongs to the HepT RNase toxin family. This sequence in the C-terminal section; belongs to the gamma-glutamylcyclotransferase family. In terms of assembly, homodimer, probably forms a complex with cognate antitoxin MJ0435. Modified by cognate antitoxin MJ0435; probably at least 2 successive AMPylation events occur on Tyr-82.

In terms of biological role, probable toxic component of a putative type VII toxin-antitoxin (TA) system, probably an RNase. Probably neutralized by cognate antitoxin MJ0435. Neutralization may be due to AMPylation by MJ0435. This Methanocaldococcus jannaschii (strain ATCC 43067 / DSM 2661 / JAL-1 / JCM 10045 / NBRC 100440) (Methanococcus jannaschii) protein is Gamma-glutamylcyclotransferase and putative RNase MJ0434.